The following is a 546-amino-acid chain: Probable protein kinase UbiB (546 aa).

One can recognise a Protein kinase domain in the interval 124–502; that stretch reads DFDITPLASA…RVKQGQSRYL (379 aa). Residues 130 to 138 and lysine 153 contribute to the ATP site; that span reads LASASIAQV. Residue aspartate 288 is the Proton acceptor of the active site. Transmembrane regions (helical) follow at residues 501–518 and 523–542; these read YLFGIGATLMLSSTLLFI and WGMSPGWLMAGGILVWLIGW.

Belongs to the ABC1 family. UbiB subfamily.

It is found in the cell inner membrane. The protein operates within cofactor biosynthesis; ubiquinone biosynthesis [regulation]. Is probably a protein kinase regulator of UbiI activity which is involved in aerobic coenzyme Q (ubiquinone) biosynthesis. This chain is Probable protein kinase UbiB, found in Cronobacter sakazakii (strain ATCC BAA-894) (Enterobacter sakazakii).